A 53-amino-acid polypeptide reads, in one-letter code: uncharacterized protein (53 aa).

This is an uncharacterized protein from Plasmodium falciparum (isolate fcm17 / Senegal).